The following is a 136-amino-acid chain: Transcription antitermination protein NusB (136 aa).

Belongs to the NusB family.

Involved in transcription antitermination. Required for transcription of ribosomal RNA (rRNA) genes. Binds specifically to the boxA antiterminator sequence of the ribosomal RNA (rrn) operons. This chain is Transcription antitermination protein NusB, found in Pseudarthrobacter chlorophenolicus (strain ATCC 700700 / DSM 12829 / CIP 107037 / JCM 12360 / KCTC 9906 / NCIMB 13794 / A6) (Arthrobacter chlorophenolicus).